The primary structure comprises 237 residues: Phosphoglycolate phosphatase (237 aa).

Aspartate 15 acts as the Nucleophile in catalysis. Aspartate 15, aspartate 17, and aspartate 177 together coordinate Mg(2+).

It belongs to the HAD-like hydrolase superfamily. CbbY/CbbZ/Gph/YieH family. Mg(2+) serves as cofactor.

It carries out the reaction 2-phosphoglycolate + H2O = glycolate + phosphate. It functions in the pathway organic acid metabolism; glycolate biosynthesis; glycolate from 2-phosphoglycolate: step 1/1. In terms of biological role, specifically catalyzes the dephosphorylation of 2-phosphoglycolate. Is involved in the dissimilation of the intracellular 2-phosphoglycolate formed during the DNA repair of 3'-phosphoglycolate ends, a major class of DNA lesions induced by oxidative stress. The sequence is that of Phosphoglycolate phosphatase from Caulobacter vibrioides (strain ATCC 19089 / CIP 103742 / CB 15) (Caulobacter crescentus).